The following is a 395-amino-acid chain: MQSMVILGATGSIGASTLSVIASNPETYSVYALVANTNVDKMMALCEQYRPKVAHMVDEQAAKSLQERLSPSLKIEVTTGESQLESIVTSSCVDTVMAAIVGAAGLVPTLAAVKAGKRVLLANKESLVMSGRLFIEEMKKSGAQVLPVDSEHNAIFQALPEPVQQEIGFCDLDEAGISHILLTGSGGPFLTSPLSSLPQMTPAQACKHPNWSMGRKISVDSASMMNKGLEYIEARWLFNASAEQLKVVIHPQSVIHSMVQYRDGSVIAQLGNPDMRTPIAHCMSYPQRINSGVEPLDFFKVGQLSFLEPDFTRFPCLALAIDACNQGQEATTILNAANEISVAAFLDNKIKFTDIAKVNETCLSQVAKQALNSIDDILALDVQTRTYASEWVNKI.

6 residues coordinate NADPH: T10, G11, S12, I13, N38, and N123. K124 contacts 1-deoxy-D-xylulose 5-phosphate. An NADPH-binding site is contributed by E125. D149 serves as a coordination point for Mn(2+). 4 residues coordinate 1-deoxy-D-xylulose 5-phosphate: S150, E151, S185, and H208. E151 contacts Mn(2+). G214 provides a ligand contact to NADPH. Residues S221, N226, K227, and E230 each coordinate 1-deoxy-D-xylulose 5-phosphate. E230 provides a ligand contact to Mn(2+).

This sequence belongs to the DXR family. It depends on Mg(2+) as a cofactor. Mn(2+) is required as a cofactor.

It carries out the reaction 2-C-methyl-D-erythritol 4-phosphate + NADP(+) = 1-deoxy-D-xylulose 5-phosphate + NADPH + H(+). The protein operates within isoprenoid biosynthesis; isopentenyl diphosphate biosynthesis via DXP pathway; isopentenyl diphosphate from 1-deoxy-D-xylulose 5-phosphate: step 1/6. Functionally, catalyzes the NADPH-dependent rearrangement and reduction of 1-deoxy-D-xylulose-5-phosphate (DXP) to 2-C-methyl-D-erythritol 4-phosphate (MEP). This chain is 1-deoxy-D-xylulose 5-phosphate reductoisomerase, found in Shewanella woodyi (strain ATCC 51908 / MS32).